The primary structure comprises 547 residues: CTP synthase (547 aa).

The interval 1–266 (MTKYIFVTGG…GDYLVERLGL (266 aa)) is amidoligase domain. Residue Ser13 participates in CTP binding. Position 13 (Ser13) interacts with UTP. 14–19 (SVGKGI) contacts ATP. Tyr54 is a binding site for L-glutamine. An ATP-binding site is contributed by Asp71. Asp71 and Glu141 together coordinate Mg(2+). CTP is bound by residues 148 to 150 (DIE), 187 to 192 (KTKPTQ), and Lys223. UTP contacts are provided by residues 187 to 192 (KTKPTQ) and Lys223. Residues 291–533 (PIALVGKYVE…IAAAAQTLLA (243 aa)) enclose the Glutamine amidotransferase type-1 domain. Residue Gly353 coordinates L-glutamine. The Nucleophile; for glutamine hydrolysis role is filled by Cys380. L-glutamine-binding positions include 381–384 (LGMQ), Glu404, and Arg461. Catalysis depends on residues His506 and Glu508.

It belongs to the CTP synthase family. As to quaternary structure, homotetramer.

It carries out the reaction UTP + L-glutamine + ATP + H2O = CTP + L-glutamate + ADP + phosphate + 2 H(+). The enzyme catalyses L-glutamine + H2O = L-glutamate + NH4(+). The catalysed reaction is UTP + NH4(+) + ATP = CTP + ADP + phosphate + 2 H(+). The protein operates within pyrimidine metabolism; CTP biosynthesis via de novo pathway; CTP from UDP: step 2/2. Its activity is regulated as follows. Allosterically activated by GTP, when glutamine is the substrate; GTP has no effect on the reaction when ammonia is the substrate. The allosteric effector GTP functions by stabilizing the protein conformation that binds the tetrahedral intermediate(s) formed during glutamine hydrolysis. Inhibited by the product CTP, via allosteric rather than competitive inhibition. Catalyzes the ATP-dependent amination of UTP to CTP with either L-glutamine or ammonia as the source of nitrogen. Regulates intracellular CTP levels through interactions with the four ribonucleotide triphosphates. In Chloroflexus aggregans (strain MD-66 / DSM 9485), this protein is CTP synthase.